A 429-amino-acid chain; its full sequence is Carbamoyl phosphate synthase arginine-specific small chain (429 aa).

Residues 1–20 constitute a mitochondrion transit peptide; that stretch reads MIRVIQPPLIASKQLFRRYL. In terms of domain architecture, Glutamine amidotransferase type-1 spans 218–406; that stretch reads HIAVLDCGAK…FENIEQYRAT (189 aa). Cysteine 295 acts as the Nucleophile in catalysis. Catalysis depends on residues histidine 379 and glutamate 381.

It belongs to the CarA family. As to quaternary structure, heterodimer composed of 2 chains; the small (or glutamine) chain promotes the hydrolysis of glutamine to ammonia, which is used by the large (or ammonia) chain to synthesize carbamoyl phosphate.

It localises to the mitochondrion matrix. The catalysed reaction is hydrogencarbonate + L-glutamine + 2 ATP + H2O = carbamoyl phosphate + L-glutamate + 2 ADP + phosphate + 2 H(+). It catalyses the reaction L-glutamine + H2O = L-glutamate + NH4(+). It functions in the pathway amino-acid biosynthesis; L-arginine biosynthesis; carbamoyl phosphate from bicarbonate: step 1/1. Its function is as follows. Small subunit of the arginine-specific carbamoyl phosphate synthase (CPSase). CPSase catalyzes the formation of carbamoyl phosphate from the ammonia moiety of glutamine, carbonate, and phosphate donated by ATP, the first step of the arginine biosynthetic pathway. The small subunit (glutamine amidotransferase) binds and cleaves glutamine to supply the large subunit with the substrate ammonia. The chain is Carbamoyl phosphate synthase arginine-specific small chain (CPA1) from Debaryomyces hansenii (strain ATCC 36239 / CBS 767 / BCRC 21394 / JCM 1990 / NBRC 0083 / IGC 2968) (Yeast).